Consider the following 430-residue polypeptide: Tektin-2 (430 aa).

Coiled coils occupy residues C81 to L162 and F265 to C379.

It belongs to the tektin family. As to quaternary structure, microtubule inner protein component of sperm flagellar doublet microtubules. May interact with CCDC172. In terms of processing, tyrosine phosphorylated. Post-translationally, ubiquitinated, leading to its degradation. Deubiquitinated by USP16, promoting its stability. In terms of tissue distribution, expressed in trachea multiciliated cells.

It localises to the cytoplasm. The protein resides in the cytoskeleton. The protein localises to the cilium axoneme. Its subcellular location is the flagellum axoneme. It is found in the microtubule organizing center. Microtubule inner protein (MIP) part of the dynein-decorated doublet microtubules (DMTs) in cilia and flagellar axoneme. Plays a key role in the assembly or attachment of the inner dynein arm to microtubules in sperm flagella and tracheal cilia. Forms filamentous polymers in the walls of ciliary and flagellar microtubules. In Bos taurus (Bovine), this protein is Tektin-2 (TEKT2).